We begin with the raw amino-acid sequence, 422 residues long: 5-hydroxytryptamine receptor 1A (422 aa).

Residues 1-38 (MDVLGPGQGNNTTSSEGPFGTRANATGISDVTFSYQVI) lie on the Extracellular side of the membrane. Residues N10, N11, and N24 are each glycosylated (N-linked (GlcNAc...) asparagine). A helical membrane pass occupies residues 39–59 (TSLLLGTLIFCAVLGNACVVA). Residues 60 to 73 (AIALERSLQNVANY) lie on the Cytoplasmic side of the membrane. The helical transmembrane segment at 74 to 98 (LIGSLAVTDLMVSVLVLPMAALYQV) threads the bilayer. The Extracellular segment spans residues 99–107 (LNKWTLGQV). A helical transmembrane segment spans residues 108–132 (TCDLFIALDVLCCTSSILHLCAIAL). The cysteines at positions 109 and 187 are disulfide-linked. Serotonin contacts are provided by D116 and C120. The DRY motif; important for ligand-induced conformation changes signature appears at 133-135 (DRY). The Cytoplasmic portion of the chain corresponds to 133–152 (DRYWAITDPIDYVNKRTPRR). Residues 153 to 174 (AAALISLTWLVGFLISIPPMLG) form a helical membrane-spanning segment. Topologically, residues 175 to 193 (WRTPEDRSDPDACTISKDH) are extracellular. A helical transmembrane segment spans residues 194-216 (GYTIYSTFGAFYIPLLLMLVLYG). Over 217-346 (RIFRAARFRI…LARERKTVKT (130 aa)) the chain is Cytoplasmic. The disordered stretch occupies residues 237 to 262 (GADSRLGASPAPQRKKSANGELGSRE). Positions 345, 346, and 352 each coordinate 1D-myo-inositol 4-phosphate. The chain crosses the membrane as a helical span at residues 347–370 (LGIIMGTFILCWLPFFIVALVLPF). Residues 371 to 378 (CESSCHMP) are Extracellular-facing. A helical transmembrane segment spans residues 379 to 403 (TLLGAIINWLGYSNSLLNPVIYAYF). An NPxxY motif; important for ligand-induced conformation changes and signaling motif is present at residues 396–400 (NPVIY). 1D-myo-inositol 4-phosphate is bound by residues F403, N404, and K405. The Cytoplasmic portion of the chain corresponds to 404-422 (NKDFQNAFKKILKCKFCRR).

Belongs to the G-protein coupled receptor 1 family. 5-hydroxytryptamine receptor subfamily. HTR1A sub-subfamily. As to quaternary structure, heterodimer; heterodimerizes with GPER1. Interacts with YIF1B. Interacts with GPR39 and GALR1.

The protein resides in the cell membrane. The protein localises to the cell projection. It is found in the dendrite. With respect to regulation, G-protein coupled receptor activity is regulated by lipids: phosphatidylinositol 4-phosphate increases HTR1A-mediated activity. Functionally, G-protein coupled receptor for 5-hydroxytryptamine (serotonin). Also functions as a receptor for various drugs and psychoactive substances. Ligand binding causes a conformation change that triggers signaling via guanine nucleotide-binding proteins (G proteins) and modulates the activity of downstream effectors, such as adenylate cyclase. HTR1A is coupled to G(i)/G(o) G alpha proteins and mediates inhibitory neurotransmission: signaling inhibits adenylate cyclase activity and activates a phosphatidylinositol-calcium second messenger system that regulates the release of Ca(2+) ions from intracellular stores. Beta-arrestin family members regulate signaling by mediating both receptor desensitization and resensitization processes. The chain is 5-hydroxytryptamine receptor 1A (HTR1A) from Equus caballus (Horse).